The sequence spans 308 residues: Acetaldehyde dehydrogenase 2 (308 aa).

12–15 provides a ligand contact to NAD(+); that stretch reads SGNI. The Acyl-thioester intermediate role is filled by C127. NAD(+) is bound by residues 162–170 and N281; that span reads SAGPGTRAN.

Belongs to the acetaldehyde dehydrogenase family.

It catalyses the reaction acetaldehyde + NAD(+) + CoA = acetyl-CoA + NADH + H(+). The sequence is that of Acetaldehyde dehydrogenase 2 from Mycobacterium marinum (strain ATCC BAA-535 / M).